We begin with the raw amino-acid sequence, 74 residues long: UPF0352 protein HAPS_0210 (74 aa).

It belongs to the UPF0352 family.

The sequence is that of UPF0352 protein HAPS_0210 from Glaesserella parasuis serovar 5 (strain SH0165) (Haemophilus parasuis).